The primary structure comprises 183 residues: DELTA-miturgitoxin-Cp1b (183 aa).

Positions 1-20 are cleaved as a signal peptide; it reads MKFSLFFSVFFLAVLHACLS. Residues 21–47 constitute a propeptide that is removed on maturation; it reads ESEIDLEDEEHFMSSDSFLSEIQDESR. The Processing quadruplet motif signature appears at 44-47; sequence DESR. Disulfide bonds link Cys51–Cys66, Cys58–Cys75, Cys65–Cys88, Cys77–Cys86, Cys115–Cys130, Cys122–Cys139, Cys129–Cys157, and Cys141–Cys155. Residues 164–177 are predicted alpha-helix; it reads QAIEGALRIAKKLI. Trp181 is subject to Tryptophan amide.

It belongs to the neurotoxin 19 (CSTX) family. Double-CSTX subfamily. Post-translationally, cleavage of the propeptide depends on the processing quadruplet motif (XXXR, with at least one of X being E). In terms of tissue distribution, expressed by the venom gland.

The protein localises to the secreted. It localises to the target cell membrane. Its function is as follows. Spider venom toxin that exhibits cytolytic activity by forming an alpha-helix across the membrane. Lethal to insect larvae. Causes instant paralysis and death in the larvae of the flesh fly (S.carnaria) at doses of 20 ug/g, at doses of less than 10 ug/g causes reversible paralysis. Has cytolytic activity against insect Sf9 cells. Causes stable and irreversible depolarization of fly muscle fibers, leading to contracture at higher toxin concentrations. Destabilizes membranes. In Cheiracanthium punctorium (Yellow sac spider), this protein is DELTA-miturgitoxin-Cp1b.